The chain runs to 322 residues: MIFSTVEHILTHISFSIVSIIITMRLISFFLVDGIVQLYDSSEKGMIVTFLCLTGLLVTRWTYSGHFPLSNLYESLIFLSWSFSLIHIVPYFKKNKKYLSTITGSSVVFTQGFTTSGLLTEIDQSSILVPALQSEWLIMHVTMMILGYASLLCGSLLSIALLVITFRKNKKILYRNNLLLNESFFFVEIEYMNERSNLLQNTSFFSAKNYYRSQLIQQLDYWSSRGISLGFIFLTIGILSGAVWANEAWGSYWNWDPKETWAFITWIIFAIYLHTRTTRNPKCANSAIVASIGFLIIWICYFGVNLLGIGLHSYGSFTLLAN.

The next 8 membrane-spanning stretches (helical) occupy residues 15-35 (FSIVSIIITMRLISFFLVDGI), 45-65 (GMIVTFLCLTGLLVTRWTYSG), 72-92 (LYESLIFLSWSFSLIHIVPYF), 98-120 (YLSTITGSSVVFTQGFTTSGLLT), 144-164 (MILGYASLLCGSLLSIALLVI), 226-246 (GISLGFIFLTIGILSGAVWAN), 253-273 (WNWDPKETWAFITWIIFAIYL), and 287-307 (AIVASIGFLIIWICYFGVNLL).

This sequence belongs to the CcmF/CycK/Ccl1/NrfE/CcsA family. In terms of assembly, may interact with Ccs1.

The protein localises to the plastid. Its subcellular location is the chloroplast thylakoid membrane. Functionally, required during biogenesis of c-type cytochromes (cytochrome c6 and cytochrome f) at the step of heme attachment. This Coffea arabica (Arabian coffee) protein is Cytochrome c biogenesis protein CcsA.